The chain runs to 163 residues: Putative 4-hydroxy-4-methyl-2-oxoglutarate aldolase (163 aa).

Substrate contacts are provided by residues 76-79 (GDML) and Arg98. Asp99 contacts a divalent metal cation.

Belongs to the class II aldolase/RraA-like family. As to quaternary structure, homotrimer. A divalent metal cation is required as a cofactor.

The enzyme catalyses 4-hydroxy-4-methyl-2-oxoglutarate = 2 pyruvate. It carries out the reaction oxaloacetate + H(+) = pyruvate + CO2. Catalyzes the aldol cleavage of 4-hydroxy-4-methyl-2-oxoglutarate (HMG) into 2 molecules of pyruvate. Also contains a secondary oxaloacetate (OAA) decarboxylase activity due to the common pyruvate enolate transition state formed following C-C bond cleavage in the retro-aldol and decarboxylation reactions. This is Putative 4-hydroxy-4-methyl-2-oxoglutarate aldolase from Pseudomonas fluorescens (strain ATCC BAA-477 / NRRL B-23932 / Pf-5).